The following is a 1342-amino-acid chain: DNA-directed RNA polymerase subunit beta (1342 aa).

It belongs to the RNA polymerase beta chain family. In terms of assembly, the RNAP catalytic core consists of 2 alpha, 1 beta, 1 beta' and 1 omega subunit. When a sigma factor is associated with the core the holoenzyme is formed, which can initiate transcription.

The enzyme catalyses RNA(n) + a ribonucleoside 5'-triphosphate = RNA(n+1) + diphosphate. Functionally, DNA-dependent RNA polymerase catalyzes the transcription of DNA into RNA using the four ribonucleoside triphosphates as substrates. This chain is DNA-directed RNA polymerase subunit beta, found in Histophilus somni (strain 2336) (Haemophilus somnus).